The following is a 426-amino-acid chain: Serine protease HTRA2, mitochondrial (426 aa).

The span at 31–58 (SSTCNSTNTDNGSHNTNYNSSNNNNNNN) shows a compositional bias: low complexity. A disordered region spans residues 31–59 (SSTCNSTNTDNGSHNTNYNSSNNNNNNND). The chain crosses the membrane as a helical span at residues 71 to 87 (FLVPFSLGALASSVVAG). An IAP-binding motif is present at residues 79–82 (ALAS). The serine protease stretch occupies residues 143-306 (SNGSGFVIEQ…IPIDYVKLFL (164 aa)). Active-site charge relay system residues include His161, Asp193, and Ser270. In terms of domain architecture, PDZ spans 329-414 (MGITMLTLTP…DLDMVILRGV (86 aa)).

This sequence belongs to the peptidase S1C family. In terms of assembly, interacts with th/DIAP1 (via BIR 2 domain).

It is found in the mitochondrion intermembrane space. Its subcellular location is the mitochondrion membrane. It catalyses the reaction Cleavage of non-polar aliphatic amino-acids at the P1 position, with a preference for Val, Ile and Met. At the P2 and P3 positions, Arg is selected most strongly with a secondary preference for other hydrophilic residues.. Functionally, serine protease that shows proteolytic activity against a non-specific substrate beta-casein. Promotes or induces cell death either by direct binding to and inhibition of BIRC proteins (also called inhibitor of apoptosis proteins, IAPs), leading to an increase in caspase activity, or by a BIRC inhibition-independent, caspase-independent and serine protease activity-dependent mechanism. Can antagonize antiapoptotic activity of th/Diap1 by directly inducing the degradation of th/Diap1. This Drosophila grimshawi (Hawaiian fruit fly) protein is Serine protease HTRA2, mitochondrial.